Here is a 503-residue protein sequence, read N- to C-terminus: ATP synthase subunit alpha, chloroplastic (503 aa).

An ATP-binding site is contributed by 170–177 (GDRQTGKT).

It belongs to the ATPase alpha/beta chains family. F-type ATPases have 2 components, CF(1) - the catalytic core - and CF(0) - the membrane proton channel. CF(1) has five subunits: alpha(3), beta(3), gamma(1), delta(1), epsilon(1). CF(0) has four main subunits: a, b, b' and c.

The protein resides in the plastid. It is found in the chloroplast thylakoid membrane. The enzyme catalyses ATP + H2O + 4 H(+)(in) = ADP + phosphate + 5 H(+)(out). Functionally, produces ATP from ADP in the presence of a proton gradient across the membrane. The alpha chain is a regulatory subunit. The sequence is that of ATP synthase subunit alpha, chloroplastic from Gracilaria tenuistipitata var. liui (Red alga).